Consider the following 305-residue polypeptide: Acyl transferase (305 aa).

Catalysis depends on charge relay system residues Ser114, Asp211, and His241.

It belongs to the LuxD family.

Its pathway is lipid metabolism; fatty acid reduction for biolumincescence. Its function is as follows. Acyl transferase is part of the fatty acid reductase system required for aldehyde biosynthesis; it produces fatty acids for the luminescent reaction. This is Acyl transferase from Vibrio campbellii (strain ATCC BAA-1116).